Here is a 341-residue protein sequence, read N- to C-terminus: UDP-3-O-acylglucosamine N-acyltransferase (341 aa).

Residue His-241 is the Proton acceptor of the active site.

Belongs to the transferase hexapeptide repeat family. LpxD subfamily. Homotrimer.

The catalysed reaction is a UDP-3-O-[(3R)-3-hydroxyacyl]-alpha-D-glucosamine + a (3R)-hydroxyacyl-[ACP] = a UDP-2-N,3-O-bis[(3R)-3-hydroxyacyl]-alpha-D-glucosamine + holo-[ACP] + H(+). Its pathway is bacterial outer membrane biogenesis; LPS lipid A biosynthesis. Catalyzes the N-acylation of UDP-3-O-acylglucosamine using 3-hydroxyacyl-ACP as the acyl donor. Is involved in the biosynthesis of lipid A, a phosphorylated glycolipid that anchors the lipopolysaccharide to the outer membrane of the cell. In Histophilus somni (strain 129Pt) (Haemophilus somnus), this protein is UDP-3-O-acylglucosamine N-acyltransferase.